We begin with the raw amino-acid sequence, 294 residues long: Survival motor neuron protein (294 aa).

Over residues 1–12 the composition is skewed to gly residues; that stretch reads MAMSSGGSGGGV. Positions 1 to 32 are disordered; it reads MAMSSGGSGGGVPEQEDSVLFRRGTGQSDDSD. A2 is modified (N-acetylalanine). Residues S4, S5, and S8 each carry the phosphoserine; by PKA modification. Residues 13–44 are P1 (binding site for GEMIN2); sequence PEQEDSVLFRRGTGQSDDSDIWDDTALIKAYD. At T25 the chain carries Phosphothreonine. Phosphoserine occurs at positions 28 and 31. K51 participates in a covalent cross-link: Glycyl lysine isopeptide (Lys-Gly) (interchain with G-Cter in SUMO2). Residues 58–88 form a disordered region; it reads DICETSGKPKTTPKRKPAKKNKSQKKNTAAP. Residues 68–82 are compositionally biased toward basic residues; sequence TTPKRKPAKKNKSQK. T69 carries the phosphothreonine modification. T85 bears the Phosphothreonine; by PKA mark. The region spanning 91–151 is the Tudor domain; that stretch reads QWKVGDKCSA…LSPISEVANN (61 aa). Positions 97–209 are required for interaction with RPP20/POP7; it reads KCSAIWSEDG…MPGPRLGPGK (113 aa). Residues 156–166 show a composition bias toward low complexity; the sequence is AQENENESQVS. The interval 156–222 is disordered; sequence AQENENESQV…KFNGPPPPPP (67 aa). A Phosphoserine; by PKA modification is found at S187. A compositionally biased stretch (pro residues) spans 194 to 204; that stretch reads LPPPPPMPGPR. Residue K209 forms a Glycyl lysine isopeptide (Lys-Gly) (interchain with G-Cter in SUMO2) linkage. The interval 240–267 is P2 (binding site for SM B); sequence PPIIPPPPPICPDSLDDADALGSMLISW. The segment at 279 to 294 is required for interaction with SYNCRIP; that stretch reads GFRQNQKEGRCSHSLN.

Belongs to the SMN family. Homooligomer; may form higher order homooligomers in the dimer to octamer range. Part of the core SMN complex that contains SMN1, GEMIN2/SIP1, DDX20/GEMIN3, GEMIN4, GEMIN5, GEMIN6, GEMIN7, GEMIN8 and STRAP/UNRIP. Part of the SMN-Sm complex that contains SMN1, GEMIN2/SIP1, DDX20/GEMIN3, GEMIN4, GEMIN5, GEMIN6, GEMIN7, GEMIN8, STRAP/UNRIP and the Sm proteins SNRPB, SNRPD1, SNRPD2, SNRPD3, SNRPE, SNRPF and SNRPG. Component of an import snRNP complex composed of KPNB1, RNUT1, SMN1 and ZNF259. Interacts with DDX20, FBL, NOLA1, RNUT1, SYNCRIP and with several spliceosomal snRNP core Sm proteins, including SNRPB, SNRPD1, SNRPD2, SNRPD3, SNRPE and ILF3. Interacts with GEMIN2; the interaction is direct. Interacts with GEMIN3; the interaction is direct. Interacts with GEMIN8; the interaction is direct. Interacts with SNRPB; the interaction is direct. Interacts (via Tudor domain) with SNRPD1 (via C-terminus); the interaction is direct. Interacts with SNRPD2; the interaction is direct. Interacts (via Tudor domain) with SNRPD3 (via C-terminus); the interaction is direct. Interacts with SNRPE; the interaction is direct. Interacts with OSTF1, LSM10, LSM11 and RPP20/POP7. Interacts (via C-terminal region) with ZPR1 (via C-terminal region). Interacts (via Tudor domain) with COIL. Interacts with SETX; recruits SETX to POLR2A. Interacts with POLR2A (via the C-terminal domain (CTD)). Interacts with PRMT5. Interacts with XRN2. Interacts (via C-terminus) with FMR1 (via C-terminus); the interaction is direct and occurs in a RNA-independent manner. Interacts (via Tudor domain) with SF3B2 ('Arg-508'-methylated form). Interacts with WRAP53/TCAB1. Interacts (via Tudor domain) with ELAVL4 in an RNA-independent manner; the interaction is required for localization of ELAVL4 to RNA granules. Interacts with FRG1.

It is found in the nucleus. Its subcellular location is the gem. The protein localises to the cajal body. It localises to the cytoplasm. The protein resides in the cytoplasmic granule. It is found in the perikaryon. Its subcellular location is the cell projection. The protein localises to the neuron projection. It localises to the axon. The protein resides in the myofibril. It is found in the sarcomere. Its subcellular location is the z line. The SMN complex catalyzes the assembly of small nuclear ribonucleoproteins (snRNPs), the building blocks of the spliceosome, and thereby plays an important role in the splicing of cellular pre-mRNAs. Most spliceosomal snRNPs contain a common set of Sm proteins SNRPB, SNRPD1, SNRPD2, SNRPD3, SNRPE, SNRPF and SNRPG that assemble in a heptameric protein ring on the Sm site of the small nuclear RNA to form the core snRNP (Sm core). In the cytosol, the Sm proteins SNRPD1, SNRPD2, SNRPE, SNRPF and SNRPG are trapped in an inactive 6S pICln-Sm complex by the chaperone CLNS1A that controls the assembly of the core snRNP. To assemble core snRNPs, the SMN complex accepts the trapped 5Sm proteins from CLNS1A forming an intermediate. Binding of snRNA inside 5Sm ultimately triggers eviction of the SMN complex, thereby allowing binding of SNRPD3 and SNRPB to complete assembly of the core snRNP. Within the SMN complex, SMN1 acts as a structural backbone and together with GEMIN2 it gathers the Sm complex subunits. Ensures the correct splicing of U12 intron-containing genes that may be important for normal motor and proprioceptive neurons development. Also required for resolving RNA-DNA hybrids created by RNA polymerase II, that form R-loop in transcription terminal regions, an important step in proper transcription termination. May also play a role in the metabolism of small nucleolar ribonucleoprotein (snoRNPs). This is Survival motor neuron protein (SMN1) from Macaca fascicularis (Crab-eating macaque).